We begin with the raw amino-acid sequence, 79 residues long: MPKRILSGVVTSDANDQTVSVSVERRFTHPVLKKTIRKSKKYRAHDENNTFKKGDAVRIVECAPKSKTKRWEVLQAAEV.

The protein belongs to the universal ribosomal protein uS17 family. Part of the 30S ribosomal subunit.

Functionally, one of the primary rRNA binding proteins, it binds specifically to the 5'-end of 16S ribosomal RNA. This Roseobacter denitrificans (strain ATCC 33942 / OCh 114) (Erythrobacter sp. (strain OCh 114)) protein is Small ribosomal subunit protein uS17.